The following is a 518-amino-acid chain: Glutamate--cysteine ligase (518 aa).

Belongs to the glutamate--cysteine ligase type 1 family. Type 1 subfamily.

The catalysed reaction is L-cysteine + L-glutamate + ATP = gamma-L-glutamyl-L-cysteine + ADP + phosphate + H(+). Its pathway is sulfur metabolism; glutathione biosynthesis; glutathione from L-cysteine and L-glutamate: step 1/2. The sequence is that of Glutamate--cysteine ligase from Salmonella typhi.